The following is a 2778-amino-acid chain: Probable ubiquitin carboxyl-terminal hydrolase FAF (2778 aa).

Positions 1 to 85 (MTFDTRRHTT…SQSSDDVAAS (85 aa)) are disordered. The segment covering 10–39 (TGQPGSTAPSSSSSTTSTTTTTTSPAQSAG) has biased composition (low complexity). Over residues 71–85 (QPATDSQSSDDVAAS) the composition is skewed to polar residues. Phosphoserine is present on Ser-924. Residues 1065 to 1094 (GTGLASSPDSSSDSSTGSPPRPCPDMQRVE) are disordered. A compositionally biased stretch (low complexity) spans 1070–1082 (SSPDSSSDSSTGS). Residues 1668–2062 (CGLKNAGATC…NAYMLFYTRC (395 aa)) enclose the USP domain. The active-site Nucleophile is Cys-1677. The active-site Proton acceptor is His-1986. 2 disordered regions span residues 2568–2632 (VSEK…GDSN) and 2644–2691 (AYTS…INGL). Composition is skewed to low complexity over residues 2614–2627 (TPTTSSPSTAAWPA) and 2644–2671 (AYTSTGSGSTSGGSAPTSALTTTAGSGA). Residues 2672–2691 (NSETESSAQETTGETTINGL) show a composition bias toward polar residues.

This sequence belongs to the peptidase C19 family. Interacts with imd. In terms of processing, ubiquitinated. Ubiquitination is enhanced by the expression of imd. In terms of tissue distribution, eye disks and ovaries. Expressed in larval fat body.

It carries out the reaction Thiol-dependent hydrolysis of ester, thioester, amide, peptide and isopeptide bonds formed by the C-terminal Gly of ubiquitin (a 76-residue protein attached to proteins as an intracellular targeting signal).. Its function is as follows. Ubiquitin C-terminal hydrolase involved in development and the imd/NF-kappa-B (IMD) signaling cascade. Required for eye and embryo development, and plays a role in compound eye assembly and oogenesis respectively. In the larval eye disks, cells outside the assembling facets require this protein for short-range cell interactions that prevent the mystery cells from becoming photoreceptors. Also required for nuclear migration and cellularization in early embryogenesis and could play a role in pole cell determination, development or function. Regulates the IMD signaling cascade at later stages of infection (around 6 hours post-infection) by inhibiting the expression of the antimicrobial peptides Dpt and Dro. Acts by modulating the state of imd polyubiquitination and/or stability; a function which appears to be independent of its enzymatic activity. In turn, imd enhances the polyubiquitination and stability of faf suggesting that they may form a regulatory feedback mechanism within the Imd pathway. The sequence is that of Probable ubiquitin carboxyl-terminal hydrolase FAF (faf) from Drosophila melanogaster (Fruit fly).